Here is a 603-residue protein sequence, read N- to C-terminus: MTTAPIDNIRNFSIVAHIDHGKSTLADRLIQITGGMTDREMAGKEQVLDSMDIERERGITIKAQTVRLNYHAKDGKDYIFNLMDTPGHVDFAYEVSRSLAACEGSLLVVDASQGVEAQTLANVYHALDAGHEIVPVLNKVDLPAAEPEMIKQQIEDVIGLDASDAVMISAKTGFGVPEVLEAIVTRLPPPKGDRTASLKALLVDSWYDVYLGVVVLVRVVDGVMKKGQRIRMMGTNAAYDLERVGYFTPKMTAVDELGPGEIGFITAAIKEVADTRVGDTITDDRKPITEMLPGFKPAIPVVFCGLFPVDADDFETLRAAMGKLRLNDASFSFEMETSAALGFGFRCGFLGLLHLEIIQERLSREFDLDLIATAPSVIYKMKLNDGSEIEIHNPVDMPDVVRIQEIDEPWIEATILTPDEYLGSVLKLCQDRRGNQKELTYVGARAMVKYDLPLNEVVFDFYDRLKSVSKGYASFDYHLTDYKPADLVKMQILVNAEPVDALSMLVHRTRAEGRGRAMVEKMKELIPPHMFVIPIQAAIGGKIIARETVRALRKDVTAKCYGGDVTRKRKLLEKQKEGKKKLRQFGKVDIPQEAFIAALKVDS.

One can recognise a tr-type G domain in the interval 7–191 (DNIRNFSIVA…AIVTRLPPPK (185 aa)). GTP-binding positions include 19–24 (DHGKST) and 138–141 (NKVD).

It belongs to the TRAFAC class translation factor GTPase superfamily. Classic translation factor GTPase family. LepA subfamily.

The protein resides in the cell inner membrane. It carries out the reaction GTP + H2O = GDP + phosphate + H(+). Its function is as follows. Required for accurate and efficient protein synthesis under certain stress conditions. May act as a fidelity factor of the translation reaction, by catalyzing a one-codon backward translocation of tRNAs on improperly translocated ribosomes. Back-translocation proceeds from a post-translocation (POST) complex to a pre-translocation (PRE) complex, thus giving elongation factor G a second chance to translocate the tRNAs correctly. Binds to ribosomes in a GTP-dependent manner. The polypeptide is Elongation factor 4 (Rhodopseudomonas palustris (strain BisA53)).